Reading from the N-terminus, the 529-residue chain is uncharacterized protein (529 aa).

ABC transporter domains lie at 6–257 (LAIE…QKLL) and 287–526 (IRKG…RQLL). ATP-binding positions include 42–49 (GESGSGKS) and 319–326 (GESGSGKS).

This sequence belongs to the ABC transporter superfamily.

This is an uncharacterized protein from Escherichia coli (strain K12).